Reading from the N-terminus, the 186-residue chain is MAKPEKVSAVAEITEQFKGSTAAVITEYRGLTVGNITTLRRALGEGATYSVAKNTLVKRAAAEAGVEGLDDLFVGPTAIAFIKGEPVDAAKALKNFAKDNKALIIKGGYMDGAALSVDEVNKIADLESREILLAKLAGAMKGNLAKAAGLFNAPASQVARLAAALQEKKAAEGGAAEAPAEAAAES.

This sequence belongs to the universal ribosomal protein uL10 family. Part of the ribosomal stalk of the 50S ribosomal subunit. The N-terminus interacts with L11 and the large rRNA to form the base of the stalk. The C-terminus forms an elongated spine to which L12 dimers bind in a sequential fashion forming a multimeric L10(L12)X complex.

In terms of biological role, forms part of the ribosomal stalk, playing a central role in the interaction of the ribosome with GTP-bound translation factors. This is Large ribosomal subunit protein uL10 from Rhodococcus jostii (strain RHA1).